Reading from the N-terminus, the 450-residue chain is Divalent metal cation transporter MntH (450 aa).

11 helical membrane-spanning segments follow: residues 34 to 54, 61 to 81, 108 to 128, 141 to 161, 170 to 190, 212 to 232, 263 to 283, 305 to 325, 361 to 381, 383 to 403, and 422 to 442; these read LSFL…GNWI, AQYG…AMLL, IAII…IAEV, IPLI…LFIM, AIVG…VYIS, GILY…NLYL, IQLS…ASLF, PVLG…ALLA, SLAV…AAKI, QLLV…LIPL, and VNII…YLIV.

It belongs to the NRAMP family.

The protein localises to the cell membrane. H(+)-stimulated, divalent metal cation uptake system. This Staphylococcus aureus (strain JH1) protein is Divalent metal cation transporter MntH.